The primary structure comprises 223 residues: Ubiquitin-conjugating enzyme E2 S (223 aa).

M1 is subject to N-acetylmethionine. The UBC core domain occupies 11-157 (HIIRLVYKEV…ARLLTEIHGG (147 aa)). The active-site Glycyl thioester intermediate is C95. The tract at residues 155–223 (HGGAGGPSGG…TDKKRALRRL (69 aa)) is disordered. Over residues 169 to 195 (GRATASGAAASTADPTAPGGPAGAEGP) the composition is skewed to low complexity. The residue at position 174 (S174) is a Phosphoserine. Basic residues predominate over residues 209 to 223 (AAKKKTDKKRALRRL).

The protein belongs to the ubiquitin-conjugating enzyme family. In terms of assembly, component of the APC/C complex, composed of at least 14 distinct subunits that assemble into a complex of at least 19 chains with a combined molecular mass of around 1.2 MDa. Within this complex, directly interacts with ANAPC2 and ANAPC4. Interacts with CDC20, FZR1/CDH1 and VHL. In terms of processing, autoubiquitinated by the APC/C complex during G1, leading to its degradation by the proteasome.

The catalysed reaction is S-ubiquitinyl-[E1 ubiquitin-activating enzyme]-L-cysteine + [E2 ubiquitin-conjugating enzyme]-L-cysteine = [E1 ubiquitin-activating enzyme]-L-cysteine + S-ubiquitinyl-[E2 ubiquitin-conjugating enzyme]-L-cysteine.. The protein operates within protein modification; protein ubiquitination. Its function is as follows. Accepts ubiquitin from the E1 complex and catalyzes its covalent attachment to other proteins. Catalyzes 'Lys-11'-linked polyubiquitination. Acts as an essential factor of the anaphase promoting complex/cyclosome (APC/C), a cell cycle-regulated ubiquitin ligase that controls progression through mitosis. Acts by specifically elongating 'Lys-11'-linked polyubiquitin chains initiated by the E2 enzyme UBE2C/UBCH10 on APC/C substrates, enhancing the degradation of APC/C substrates by the proteasome and promoting mitotic exit. Also acts by elongating ubiquitin chains initiated by the E2 enzyme UBE2D1/UBCH5 in vitro; it is however unclear whether UBE2D1/UBCH5 acts as an E2 enzyme for the APC/C in vivo. Also involved in ubiquitination and subsequent degradation of VHL, resulting in an accumulation of HIF1A. In vitro able to promote polyubiquitination using all 7 ubiquitin Lys residues, except 'Lys-48'-linked polyubiquitination. The polypeptide is Ubiquitin-conjugating enzyme E2 S (UBE2S) (Bos taurus (Bovine)).